Consider the following 418-residue polypeptide: Voltage-gated ClC-type chloride channel ClcB (418 aa).

Position 1 (M1) is a topological domain, cytoplasmic. A helical membrane pass occupies residues 2–22 (FHRLLIATVVGILAAFAVAGF). Residues 23-53 (RHAMLLLEWLFLNNDSGSLVNAATNLSPWRR) are Periplasmic-facing. Residues 54–74 (LLTPALGGLAAGLLLMGWQKF) traverse the membrane as a helical segment. Residues 75-145 (TQQRPHAPTD…QRFTPRQEWK (71 aa)) are Cytoplasmic-facing. The chain crosses the membrane as a helical span at residues 146 to 166 (LWIACGAAAGMAAAYRAPLAG). Over 167–177 (SLFIAEVLFGT) the chain is Periplasmic. The helical transmembrane segment at 178–200 (MMLASLGPVIISAVVALLVSNLI) threads the bilayer. The Cytoplasmic portion of the chain corresponds to 201–221 (NHSDALLYNVQLSVTVQARDY). A helical transmembrane segment spans residues 222–242 (ALIISTGVLAGLCGPLLLTLM). The Periplasmic segment spans residues 243 to 257 (NACHRGFVSLKLAPP). The helical transmembrane segment at 258 to 278 (WQLALGGLIVGLLSLFTPAVW) threads the bilayer. At 279–290 (GNGYSTVQSFLT) the chain is on the cytoplasmic side. Residues 291-311 (APPLLMIIAGIFLCKLCAVLA) form a helical membrane-spanning segment. Residues 312-315 (SSGS) are Periplasmic-facing. A helical transmembrane segment spans residues 316-336 (GAPGGVFTPTLFIGLAIGMLY). At 337–351 (GRSLGLWFPDGEEIT) the chain is on the cytoplasmic side. Residues 352 to 372 (LLLGLTGMATLLAATTHAPIM) form a helical membrane-spanning segment. Residues 373–379 (STLMICE) are Periplasmic-facing. A helical membrane pass occupies residues 380-400 (MTGEYQLLPGLLIACVIASVI). Topologically, residues 401–418 (SRTLHRDSIYRQHTAQHS) are cytoplasmic.

It belongs to the chloride channel (TC 2.A.49) family. ClcB subfamily.

It localises to the cell inner membrane. Functionally, probably acts as an electrical shunt for an outwardly-directed proton pump that is linked to amino acid decarboxylation, as part of the extreme acid resistance (XAR) response. The chain is Voltage-gated ClC-type chloride channel ClcB (clcB) from Escherichia coli (strain K12).